We begin with the raw amino-acid sequence, 140 residues long: 3-hydroxyacyl-[acyl-carrier-protein] dehydratase FabZ (140 aa).

The active site involves His47.

This sequence belongs to the thioester dehydratase family. FabZ subfamily.

It is found in the cytoplasm. It carries out the reaction a (3R)-hydroxyacyl-[ACP] = a (2E)-enoyl-[ACP] + H2O. Involved in unsaturated fatty acids biosynthesis. Catalyzes the dehydration of short chain beta-hydroxyacyl-ACPs and long chain saturated and unsaturated beta-hydroxyacyl-ACPs. The polypeptide is 3-hydroxyacyl-[acyl-carrier-protein] dehydratase FabZ (Streptococcus gordonii (strain Challis / ATCC 35105 / BCRC 15272 / CH1 / DL1 / V288)).